Reading from the N-terminus, the 71-residue chain is ATP synthase subunit c (71 aa).

2 consecutive transmembrane segments (helical) span residues 5–25 (VLAA…IGIA) and 46–66 (FFIL…VMAF).

The protein belongs to the ATPase C chain family. In terms of assembly, F-type ATPases have 2 components, F(1) - the catalytic core - and F(0) - the membrane proton channel. F(1) has five subunits: alpha(3), beta(3), gamma(1), delta(1), epsilon(1). F(0) has three main subunits: a(1), b(2) and c(10-14). The alpha and beta chains form an alternating ring which encloses part of the gamma chain. F(1) is attached to F(0) by a central stalk formed by the gamma and epsilon chains, while a peripheral stalk is formed by the delta and b chains.

The protein localises to the cell membrane. F(1)F(0) ATP synthase produces ATP from ADP in the presence of a proton or sodium gradient. F-type ATPases consist of two structural domains, F(1) containing the extramembraneous catalytic core and F(0) containing the membrane proton channel, linked together by a central stalk and a peripheral stalk. During catalysis, ATP synthesis in the catalytic domain of F(1) is coupled via a rotary mechanism of the central stalk subunits to proton translocation. Its function is as follows. Key component of the F(0) channel; it plays a direct role in translocation across the membrane. A homomeric c-ring of between 10-14 subunits forms the central stalk rotor element with the F(1) delta and epsilon subunits. This chain is ATP synthase subunit c, found in Clostridium beijerinckii (strain ATCC 51743 / NCIMB 8052) (Clostridium acetobutylicum).